Here is a 188-residue protein sequence, read N- to C-terminus: Elongation factor P (188 aa).

The protein belongs to the elongation factor P family.

Its subcellular location is the cytoplasm. The protein operates within protein biosynthesis; polypeptide chain elongation. Its function is as follows. Involved in peptide bond synthesis. Stimulates efficient translation and peptide-bond synthesis on native or reconstituted 70S ribosomes in vitro. Probably functions indirectly by altering the affinity of the ribosome for aminoacyl-tRNA, thus increasing their reactivity as acceptors for peptidyl transferase. This chain is Elongation factor P, found in Streptomyces avermitilis (strain ATCC 31267 / DSM 46492 / JCM 5070 / NBRC 14893 / NCIMB 12804 / NRRL 8165 / MA-4680).